The chain runs to 151 residues: MNKTYLPSQGAIERNWYVVDAADQRLGRLATEIARVLRGKHKPTYTPHMDTGDFVIVINADKVTVTGRKASQKLYRRHSGRPGGMKVETFAHLQQRLPERIIEQAVKGMLPKNALGRQLFTKLKVYRGAEHPHQAQQPEVLSIQTFAGDDN.

It belongs to the universal ribosomal protein uL13 family. Part of the 50S ribosomal subunit.

This protein is one of the early assembly proteins of the 50S ribosomal subunit, although it is not seen to bind rRNA by itself. It is important during the early stages of 50S assembly. This is Large ribosomal subunit protein uL13 from Synechococcus elongatus (strain ATCC 33912 / PCC 7942 / FACHB-805) (Anacystis nidulans R2).